The sequence spans 196 residues: Heat shock protein beta-8 (196 aa).

A phosphoserine mark is found at Ser24 and Ser57. Thr63 carries the post-translational modification Phosphothreonine; by PKC; in vitro. Residues Arg71 and Arg78 each carry the asymmetric dimethylarginine modification. The 112-residue stretch at 74–185 (TATARFGVPA…TFGESSFNNE (112 aa)) folds into the sHSP domain. The interval 176 to 196 (TFGESSFNNELPQDSQEVTCT) is disordered. The segment covering 177 to 196 (FGESSFNNELPQDSQEVTCT) has biased composition (polar residues).

It belongs to the small heat shock protein (HSP20) family. In terms of assembly, monomer. Forms a ternary complex with BAG3 and HSPA1A. Component of the chaperone-assisted selective autophagy (CASA) complex consisting of BAG3, HSPA8/HSC70, HSPB8 and STUB1/CHIP. Interacts with HSPB1. Interacts with DNAJB6. Interacts with BAG3. In terms of tissue distribution, predominantly expressed in skeletal muscle and heart.

It is found in the cytoplasm. The protein resides in the nucleus. Its function is as follows. Involved in the chaperone-assisted selective autophagy (CASA), a crucial process for protein quality control, particularly in mechanical strained cells and tissues such as muscle. Displays temperature-dependent chaperone activity. This chain is Heat shock protein beta-8 (HSPB8), found in Homo sapiens (Human).